A 148-amino-acid chain; its full sequence is Large ribosomal subunit protein bL9 (148 aa).

This sequence belongs to the bacterial ribosomal protein bL9 family.

Binds to the 23S rRNA. This Streptomyces griseus subsp. griseus (strain JCM 4626 / CBS 651.72 / NBRC 13350 / KCC S-0626 / ISP 5235) protein is Large ribosomal subunit protein bL9.